Here is a 138-residue protein sequence, read N- to C-terminus: MPAAFPCVFPPQSLQVFPQMIVKVWEKQSLPLPGLRGSPVERLYLPRNELDNPHKQKAWKIYPPEFAVEILFGMVSVDSLLFVLSSPHWWLHLAQGSFWMSEGGFSLCHPGWSVVAQSLLTSTSAFCVRAILLPQPPE.

Residues 1–75 form the C2 tensin-type domain; sequence MPAAFPCVFP…FAVEILFGMV (75 aa).

The sequence is that of Putative phosphatidylinositol 3,4,5-trisphosphate 3-phosphatase TPTE2P1 (TPTE2P1) from Homo sapiens (Human).